A 153-amino-acid polypeptide reads, in one-letter code: MYAVVQVRGTVKTRREIKDTLKMLRLHHINHCVLIPDTPAYVGMIRKVKDFIAYGEVDAKTLEELLVNRGRLVGDIRLTDEYVKENSQYSGISDFAAALAGGQARLTDVPGLKPVLRLHPPRKGYKTTKRTVQQGGSLGYHGENINDLLYKMR.

The protein belongs to the universal ribosomal protein uL30 family. In terms of assembly, part of the 50S ribosomal subunit.

This is Large ribosomal subunit protein uL30 from Methanospirillum hungatei JF-1 (strain ATCC 27890 / DSM 864 / NBRC 100397 / JF-1).